The primary structure comprises 465 residues: Phenylalanine--tRNA ligase alpha subunit (465 aa).

L-phenylalanine contacts are provided by residues threonine 309, 348–350 (QLD), and phenylalanine 388. Glutamate 390 contributes to the Mg(2+) binding site.

The protein belongs to the class-II aminoacyl-tRNA synthetase family. Phe-tRNA synthetase alpha subunit type 2 subfamily. In terms of assembly, tetramer of two alpha and two beta subunits. Mg(2+) serves as cofactor.

The protein resides in the cytoplasm. It carries out the reaction tRNA(Phe) + L-phenylalanine + ATP = L-phenylalanyl-tRNA(Phe) + AMP + diphosphate + H(+). This Sulfolobus acidocaldarius (strain ATCC 33909 / DSM 639 / JCM 8929 / NBRC 15157 / NCIMB 11770) protein is Phenylalanine--tRNA ligase alpha subunit.